We begin with the raw amino-acid sequence, 286 residues long: UDP-3-O-acyl-N-acetylglucosamine deacetylase (286 aa).

Zn(2+) contacts are provided by H79, H237, and D241. H264 (proton donor) is an active-site residue.

The protein belongs to the LpxC family. It depends on Zn(2+) as a cofactor.

It carries out the reaction a UDP-3-O-[(3R)-3-hydroxyacyl]-N-acetyl-alpha-D-glucosamine + H2O = a UDP-3-O-[(3R)-3-hydroxyacyl]-alpha-D-glucosamine + acetate. It functions in the pathway glycolipid biosynthesis; lipid IV(A) biosynthesis; lipid IV(A) from (3R)-3-hydroxytetradecanoyl-[acyl-carrier-protein] and UDP-N-acetyl-alpha-D-glucosamine: step 2/6. Catalyzes the hydrolysis of UDP-3-O-myristoyl-N-acetylglucosamine to form UDP-3-O-myristoylglucosamine and acetate, the committed step in lipid A biosynthesis. In Brucella melitensis biotype 2 (strain ATCC 23457), this protein is UDP-3-O-acyl-N-acetylglucosamine deacetylase.